The chain runs to 402 residues: Multidrug resistance protein MdtH (402 aa).

The Cytoplasmic portion of the chain corresponds to 1 to 12 (MSRVSQARNLGK). Residues 13–33 (YFLLIDNMLVVLGFFVVFPLI) traverse the membrane as a helical segment. Over 34-98 (SIRFVDQMGW…GFATMGIAHE (65 aa)) the chain is Periplasmic. The chain crosses the membrane as a helical span at residues 99–116 (PWLLWFSCLLSGLGGTLF). Topologically, residues 117 to 138 (DPPRSALVVKLIRPQQRGRFFS) are cytoplasmic. Residues 139-159 (LLMMQDSAGAVIGALLGSWLL) traverse the membrane as a helical segment. Residues 160–164 (QYDFR) are Periplasmic-facing. Residues 165-185 (LVCATGAVLFVLCAAFNAWLL) form a helical membrane-spanning segment. Residues 186-213 (PAWKLSTVRTPVREGMTRVMRDKRFVTY) lie on the Cytoplasmic side of the membrane. Residues 214-234 (VLTLAGYYMLAVQVMLMLPIM) traverse the membrane as a helical segment. Topologically, residues 235–243 (VNDVAGAPS) are periplasmic. The helical transmembrane segment at 244-264 (AVKWMYAIEACLSLTLLYPIA) threads the bilayer. Topologically, residues 265–276 (RWSEKHFRLEHR) are cytoplasmic. Residues 277 to 297 (LMAGLLIMSLSMMPVGMVSGL) form a helical membrane-spanning segment. Topologically, residues 298 to 299 (QQ) are periplasmic. A helical membrane pass occupies residues 300 to 320 (LFNLICLFYIGSIIAEPARET). Residues 321 to 339 (LSASLADARARGSYMGFSR) lie on the Cytoplasmic side of the membrane. A helical membrane pass occupies residues 340-360 (LGLAIGGAIGYIGGGWLFDLG). Over 361–367 (KSAHQPE) the chain is Periplasmic. Residues 368–388 (LPWMMLGIIGIFTFLALGWQF) traverse the membrane as a helical segment. Residues 389–402 (SQKRAARRLLERDA) lie on the Cytoplasmic side of the membrane.

Belongs to the major facilitator superfamily. DHA1 family. MdtH (TC 2.A.1.2.21) subfamily.

The protein resides in the cell inner membrane. Confers resistance to norfloxacin and enoxacin. In Escherichia coli O9:H4 (strain HS), this protein is Multidrug resistance protein MdtH.